We begin with the raw amino-acid sequence, 468 residues long: Monocarboxylate transporter 6 (468 aa).

Residues 1-13 (MARALEQADGRWA) are Cytoplasmic-facing. Residues 14–34 (WVVLLSSLVTQALTLGFPTCI) form a helical membrane-spanning segment. Topologically, residues 35 to 53 (GVFFTDLQRDFQASNSETS) are extracellular. Residues 54–74 (WFPSILGAMVHGGGPLCSILV) form a helical membrane-spanning segment. The Cytoplasmic portion of the chain corresponds to 75–80 (KHFGCR). Residues 81–101 (VTMMLGGVLASLGMVVSTFSG) traverse the membrane as a helical segment. A topological domain (extracellular) is located at residue Ser-102. A helical membrane pass occupies residues 103–122 (LTHLFLTAGVITGLGMCFSF). The Cytoplasmic portion of the chain corresponds to 123–138 (QSSITVVGLYFVRRRP). The chain crosses the membrane as a helical span at residues 139-159 (LANALASMGLSMGVTLWPLLA). The Extracellular portion of the chain corresponds to 160–171 (RYLLETLGWRGA). A helical membrane pass occupies residues 172 to 192 (FLIFGGILLHCCVCGALLRPV). Over 193 to 239 (ATNEVPEPKEDPLLPPKIPTRSCLATCVSTIRYHLAFDILRHNMGFC) the chain is Cytoplasmic. Residues 240 to 260 (IYVTGVTWMNLGFALPHIFLV) traverse the membrane as a helical segment. The Extracellular segment spans residues 261–274 (PYAMHHGVDDYWAA). A helical transmembrane segment spans residues 275–295 (MLMSIVGFCNIFLRPMAGLLL). The Cytoplasmic portion of the chain corresponds to 296 to 306 (AGRKSLAAYRK). Residues 307–327 (YLFAVAILINGLTNLICTVSA) traverse the membrane as a helical segment. Residues 328-330 (DFR) lie on the Extracellular side of the membrane. The chain crosses the membrane as a helical span at residues 331-351 (VLLGYCLVYSLSMCGVGILVF). The Cytoplasmic portion of the chain corresponds to 352–368 (QVLMDIVPMDRFPSALG). Residues 369-389 (LFTILCGVTSLISPPLAGLLL) traverse the membrane as a helical segment. At 390-396 (DKTNNFS) the chain is on the extracellular side. Residues 397–417 (YVFYMSSGFLVSGSLILGVGF) traverse the membrane as a helical segment. Residues 418-468 (YAAEKKKLKQDGQAKMENATSEMTPMHDLTSEDKDSAKKQPYPESIYMTNV) lie on the Cytoplasmic side of the membrane. The segment at 429–468 (GQAKMENATSEMTPMHDLTSEDKDSAKKQPYPESIYMTNV) is disordered. A compositionally biased stretch (basic and acidic residues) spans 446–455 (LTSEDKDSAK).

Belongs to the major facilitator superfamily. Monocarboxylate porter (TC 2.A.1.13) family.

The protein localises to the cell membrane. Functionally, proton-linked monocarboxylate transporter. Catalyzes the rapid transport across the plasma membrane of many monocarboxylates such as lactate, pyruvate, branched-chain oxo acids derived from leucine, valine and isoleucine, and the ketone bodies acetoacetate, beta-hydroxybutyrate and acetate. The polypeptide is Monocarboxylate transporter 6 (Slc16a5) (Mus musculus (Mouse)).